A 165-amino-acid chain; its full sequence is Nucleotide-binding protein MXAN_1478 (165 aa).

This sequence belongs to the YajQ family.

Functionally, nucleotide-binding protein. The chain is Nucleotide-binding protein MXAN_1478 from Myxococcus xanthus (strain DK1622).